A 918-amino-acid polypeptide reads, in one-letter code: Chaperone protein ClpC4, chloroplastic (918 aa).

The tract at residues Leu-266 to Ser-515 is i. ATP is bound by residues Gly-311–Thr-318 and Gly-653–Ser-660. The II stretch occupies residues Val-579–Ser-774.

It belongs to the ClpA/ClpB family. ClpC subfamily.

It localises to the plastid. The protein resides in the chloroplast. Its function is as follows. Molecular chaperone that may interact with a ClpP-like protease involved in degradation of denatured proteins in the chloroplast. This chain is Chaperone protein ClpC4, chloroplastic (CPLC4), found in Oryza sativa subsp. japonica (Rice).